A 204-amino-acid chain; its full sequence is U1 small nuclear ribonucleoprotein C (204 aa).

Residues 4 to 36 form a Matrin-type zinc finger; sequence FFCDYCDVYLTHDSMSVRKAHNSGRNHLRNVVD. Residues 65–204 form a disordered region; that stretch reads ANPMLPQNQP…GAGAPGHEKR (140 aa). 2 stretches are compositionally biased toward pro residues: residues 77-154 and 166-192; these read GFPP…PGAP and APPPFPGLPGMPPPGQGFPPGGPPGFA.

The protein belongs to the U1 small nuclear ribonucleoprotein C family. U1 snRNP is composed of the 7 core Sm proteins B/B', D1, D2, D3, E, F and G that assemble in a heptameric protein ring on the Sm site of the small nuclear RNA to form the core snRNP, and at least 3 U1 snRNP-specific proteins U1-70K, U1-A and U1-C. U1-C interacts with U1 snRNA and the 5' splice-site region of the pre-mRNA.

Its subcellular location is the nucleus. Its function is as follows. Component of the spliceosomal U1 snRNP, which is essential for recognition of the pre-mRNA 5' splice-site and the subsequent assembly of the spliceosome. U1-C is directly involved in initial 5' splice-site recognition for both constitutive and regulated alternative splicing. The interaction with the 5' splice-site seems to precede base-pairing between the pre-mRNA and the U1 snRNA. Stimulates commitment or early (E) complex formation by stabilizing the base pairing of the 5' end of the U1 snRNA and the 5' splice-site region. The sequence is that of U1 small nuclear ribonucleoprotein C from Fusarium vanettenii (strain ATCC MYA-4622 / CBS 123669 / FGSC 9596 / NRRL 45880 / 77-13-4) (Fusarium solani subsp. pisi).